The following is a 315-amino-acid chain: Bifunctional protein FolD (315 aa).

Residues 166-168 (GRS), S193, and I234 each bind NADP(+).

Belongs to the tetrahydrofolate dehydrogenase/cyclohydrolase family. As to quaternary structure, homodimer.

The enzyme catalyses (6R)-5,10-methylene-5,6,7,8-tetrahydrofolate + NADP(+) = (6R)-5,10-methenyltetrahydrofolate + NADPH. It catalyses the reaction (6R)-5,10-methenyltetrahydrofolate + H2O = (6R)-10-formyltetrahydrofolate + H(+). It functions in the pathway one-carbon metabolism; tetrahydrofolate interconversion. In terms of biological role, catalyzes the oxidation of 5,10-methylenetetrahydrofolate to 5,10-methenyltetrahydrofolate and then the hydrolysis of 5,10-methenyltetrahydrofolate to 10-formyltetrahydrofolate. The polypeptide is Bifunctional protein FolD (Treponema pallidum (strain Nichols)).